We begin with the raw amino-acid sequence, 519 residues long: Cytochrome P450 52-E3 (519 aa).

A helical transmembrane segment spans residues 10 to 30 (VLGGISVSFLLAYQAIYFYFI). A heme-binding site is contributed by Cys-461.

Belongs to the cytochrome P450 family. Heme serves as cofactor.

It localises to the membrane. It carries out the reaction an omega-methyl-long-chain fatty acid + reduced [NADPH--hemoprotein reductase] + O2 = an omega-hydroxy-long-chain fatty acid + oxidized [NADPH--hemoprotein reductase] + H2O + H(+). The catalysed reaction is (9Z)-octadecenoate + reduced [NADPH--hemoprotein reductase] + O2 = 18-hydroxy-(9Z)-octadecenoate + oxidized [NADPH--hemoprotein reductase] + H2O + H(+). It catalyses the reaction hexadecanoate + reduced [NADPH--hemoprotein reductase] + O2 = 16-hydroxyhexadecanoate + oxidized [NADPH--hemoprotein reductase] + H2O + H(+). The enzyme catalyses (9Z)-hexadecenoate + reduced [NADPH--hemoprotein reductase] + O2 = (9Z)-16-hydroxyhexadec-9-enoate + oxidized [NADPH--hemoprotein reductase] + H2O + H(+). Catalyzes the terminal (at the omega-position) hydroxylation of a fatty acid. Probably involved in alkane metabolism. Has minor activity toward myristic acid, palmitic acid, palmitoleic acid and oleic acid. The polypeptide is Cytochrome P450 52-E3 (Starmerella bombicola (Yeast)).